Here is a 714-residue protein sequence, read N- to C-terminus: MSKKNPGDPRVKKNAFVHKLYTMLHDPALSHLIWWTNRNGEQNTFALCPGKEFADCLTQYFKHGNVASFVRQLHMYGFHKVSDPLPITYPPNGNNNNNNNNKEVPPVWEFKHSSGRFKRGDETSLVYIKRRSSSNHTSGSTIYAEPIYNPLLTNPYNQPQFMYQDYSMGPPVEVQQFYNYQNQPLMYYQQPPGQVPPPPPPSLPPHQQPEMALQYHQYNNYQQPPPAPPAPPPQPGNVLFGYQQVAPPQQPGSTVQQIPANAPPTLDQTQPLSYTPQLEYQQQQYPQPPLPPPPPQLQLQTSPGIPKVNDNLSRPSPNEQHLQFRKIWPDENNEANSKPRNPSLMFDPLLRVNSEGSPKTQPNHSVSLLNNEVRSESSTSSSSTTVTSTALPPPSAIDRSVSLVGGSPFDLSSRMNNQQSFNRTPSISTPPTQNGRLPKISSPLIPSNTESQSPTMVTGTDNDVGVTSKGSTSIISVSKKPSVFSNSLQERLRPSMFEYHPIGNNLSKDVLTIPKISTNSNSGSRTTSQSSMSSASALSSKKSSLSSISSTHGNLSILNSTNYRSTSVGGSGSGPFSTSTSTSTTSPTLSSLLHHPQHEPQNSTIANGTSIRSSISSSQSISSPPLTTTTTTTTTDQRQLSNSPISRQQQQQPNNNTNKKVSVTSLLLPSHSQSQGYAQPLYKSSVIAEEENSTTSSGGGYRSKSDDDTDNMNK.

A DNA-binding region spans residues 15–134 (AFVHKLYTML…LVYIKRRSSS (120 aa)). 3 disordered regions span residues 187-467 (YYQQ…VGVT), 565-658 (STSV…NNTN), and 670-714 (SHSQ…NMNK). Pro residues-rich tracts occupy residues 193-207 (GQVP…PPHQ) and 223-235 (QPPP…PPQP). Residues 266–275 (LDQTQPLSYT) are compositionally biased toward polar residues. Low complexity predominate over residues 276 to 285 (PQLEYQQQQY). A compositionally biased stretch (pro residues) spans 286–296 (PQPPLPPPPPQ). 2 stretches are compositionally biased toward polar residues: residues 310 to 321 (DNLSRPSPNEQH) and 354 to 372 (SEGS…LNNE). Over residues 376-389 (ESSTSSSSTTVTST) the composition is skewed to low complexity. Polar residues-rich tracts occupy residues 413-435 (SRMN…TQNG) and 444-461 (LIPS…TGTD). Over residues 574–591 (GPFSTSTSTSTTSPTLSS) the composition is skewed to low complexity. A compositionally biased stretch (polar residues) spans 599–608 (EPQNSTIANG). 2 stretches are compositionally biased toward low complexity: residues 609-641 (TSIR…RQLS) and 648-658 (QQQQQPNNNTN). Basic and acidic residues predominate over residues 703 to 714 (SKSDDDTDNMNK).

The protein belongs to the HSF family.

The protein resides in the nucleus. Its function is as follows. Transcription factor that plays a role of activator of filamentous growth and which is involved in invasive growth at a high temperature. Required for human oral epithelium colonization and damage. Promotes filamentous growth in EFG1- and FLO8-dependent manners. Antagonizes functions of SFL1. The chain is Transcription factor SFL2 (SFL2) from Candida albicans (strain SC5314 / ATCC MYA-2876) (Yeast).